A 266-amino-acid chain; its full sequence is Mitochondrial genome maintenance protein MGM101 (266 aa).

The transit peptide at 1-23 (MLHSTKLVFRATPQALCFPVRSY) directs the protein to the mitochondrion. 2 stretches are compositionally biased toward polar residues: residues 37-47 (KTTSKLAPSIT) and 57-68 (PSLQEPQSATST). Residues 37-68 (KTTSKLAPSITTEDEVAEQDPSLQEPQSATST) form a disordered region.

It belongs to the MGM101 family. As to quaternary structure, forms homooligomers in vitro.

Its subcellular location is the mitochondrion matrix. It is found in the mitochondrion nucleoid. Plays a role in the replication of the mitochondrial genome and the maintenance of its telomeres. Able to catalyze strand annealing and D-loop formation. Binds a wide variety of DNA substrates. Exhibited the highest affinity for DNA molecules carrying 3' ssDNA overhangs (Y-form, 3' FLAP, 3' overhang) and for substrates with complex structures (X-O and Fork). Forms homogeneous ring-shaped structures at the ssDNA native telomeres ends. Oligomers seem to bind to the ssDNA as a filament until they reach the double-stranded region and induce the formation of bends and loops within the double-stranded part of the molecules. The protein is Mitochondrial genome maintenance protein MGM101 of Candida parapsilosis (strain CDC 317 / ATCC MYA-4646) (Yeast).